The primary structure comprises 173 residues: Bifunctional protein PyrR (173 aa).

The short motif at 93-105 is the PRPP-binding element; that stretch reads VILVDDVLYTGRT.

Belongs to the purine/pyrimidine phosphoribosyltransferase family. PyrR subfamily. Homodimer and homohexamer; in equilibrium.

The catalysed reaction is UMP + diphosphate = 5-phospho-alpha-D-ribose 1-diphosphate + uracil. Regulates transcriptional attenuation of the pyrimidine nucleotide (pyr) operon by binding in a uridine-dependent manner to specific sites on pyr mRNA. This disrupts an antiterminator hairpin in the RNA and favors formation of a downstream transcription terminator, leading to a reduced expression of downstream genes. In terms of biological role, also displays a weak uracil phosphoribosyltransferase activity which is not physiologically significant. This Streptococcus thermophilus (strain CNRZ 1066) protein is Bifunctional protein PyrR.